A 65-amino-acid chain; its full sequence is Large ribosomal subunit protein bL35 (65 aa).

It belongs to the bacterial ribosomal protein bL35 family.

The protein is Large ribosomal subunit protein bL35 of Enterobacter sp. (strain 638).